Consider the following 243-residue polypeptide: UPF0758 protein sll0766 (243 aa).

Residues 113–235 enclose the MPN domain; the sequence is VVDSPEAAAI…HQSLRQCTDL (123 aa). The Zn(2+) site is built by histidine 184, histidine 186, and aspartate 197. The JAMM motif signature appears at 184 to 197; that stretch reads HNHPSGGLEPSPED.

This sequence belongs to the UPF0758 family.

This Synechocystis sp. (strain ATCC 27184 / PCC 6803 / Kazusa) protein is UPF0758 protein sll0766.